Consider the following 479-residue polypeptide: Caspase-8 (479 aa).

A propeptide spanning residues 1-216 (MDFSRNLYDI…TISDSPREQD (216 aa)) is cleaved from the precursor. 2 DED domains span residues 2–80 (DFSR…TYLN) and 100–177 (AYRV…IIND). Residues Ser188 and Ser211 each carry the phosphoserine modification. Residue Lys224 is modified to N6-acetyllysine. His317 is a catalytic residue. The residue at position 334 (Tyr334) is a Phosphotyrosine. Residue Cys360 is part of the active site. A propeptide spanning residues 375–384 (SEEQPYLEMD) is cleaved from the precursor. Tyr380 bears the Phosphotyrosine; by SRC mark. Phosphoserine; by CDK1 is present on Ser387. Arg413 bears the (Microbial infection) ADP-riboxanated arginine mark.

The protein belongs to the peptidase C14A family. As to quaternary structure, heterotetramer that consists of two anti-parallel arranged heterodimers, each one formed by a 18 kDa (p18) and a 10 kDa (p10) subunit. Component of the death-induced signaling complex (DISC) composed of cell surface receptor FAS/CD95 or TNFRSF1A, adapter protein FADD and the CASP8 protease; recruitment of CASP8 to the complex is required for processing of CASP8 into the p18 and p10 subunits. Component of the AIM2 PANoptosome complex, a multiprotein complex that drives inflammatory cell death (PANoptosis). Interacts with CFLAR and PEA15. Interacts with TNFAIP8L2. Interacts with CASP8AP2. Interacts with RFFL and RNF34; negatively regulate CASP8 through proteasomal degradation. Interacts with NOL3; decreases CASP8 activity in a mitochondria localization- and phosphorylation-dependent manner and this interaction is dissociated by calcium. Interacts with UBR2ca. Interacts with RIPK1. Interacts with stimulated TNFRSF10B; this interaction is followed by CASP8 proteolytic cleavage and activation. Interacts (phosphorylated on Tyr-380) with PIK3R1. Interacts at the endoplasmic reticulum with a complex containing BCAP31, BAP29, BCL2 and/or BCL2L1. In terms of assembly, (Microbial infection) Interacts with human cytomegalovirus/HHV-5 protein vICA/UL36; this interaction inhibits CASP8 activation. As to quaternary structure, (Microbial infection) Interacts with NleF from pathogenic E.coli. (Microbial infection) Interacts with molluscum contagiosum virus protein MC160. In terms of assembly, (Microbial infection) Interacts (via RIP homotypic interaction motif) with herpes simplex virus 1/HHV-1 protein RIR1/ICP6 (via RIP homotypic interaction motif); this interaction prevents necroptosis activation. As to quaternary structure, (Microbial infection) Interacts (via RIP homotypic interaction motif) with herpes simplex virus 2/HHV-2 protein RIR1/ICP10 (via RIP homotypic interaction motif); this interaction prevents necroptosis activation. Generation of the p10 and p18 subunits requires association with the death-inducing signaling complex (DISC), whereas additional processing is likely due to the autocatalytic activity of the activated protease. GZMB and CASP10 can be involved in these processing events. In terms of processing, phosphorylation on Ser-387 during mitosis by CDK1 inhibits activation by proteolysis and prevents apoptosis. Phosphorylation on Tyr-380 by SRC is mediated by interaction with the SRC SH2 domain and does not affect dimerization or recruitment to the death-inducing signaling complex (DISC) but negatively regulates DISC-mediated processing and activation of CASP8, down-regulating its proapoptotic function. Phosphorylation on Tyr-380 also enhances localization to lamellipodia in migrating cells. Post-translationally, (Microbial infection) ADP-riboxanation by C.violaceum CopC blocks CASP8 processing, preventing CASP8 activation and ability to mediate extrinsic apoptosis. (Microbial infection) Proteolytically cleaved by the cowpox virus CRMA death inhibitory protein. As to expression, isoform 1, isoform 5 and isoform 7 are expressed in a wide variety of tissues. Highest expression in peripheral blood leukocytes, spleen, thymus and liver. Barely detectable in brain, testis and skeletal muscle.

The protein localises to the cytoplasm. It localises to the nucleus. It is found in the cell projection. Its subcellular location is the lamellipodium. It catalyses the reaction Strict requirement for Asp at position P1 and has a preferred cleavage sequence of (Leu/Asp/Val)-Glu-Thr-Asp-|-(Gly/Ser/Ala).. Its activity is regulated as follows. CASP8 activity is restricted by RIPK1. Inhibited by the effector protein NleF that is produced by pathogenic E.coli; this inhibits apoptosis. Thiol protease that plays a key role in programmed cell death by acting as a molecular switch for apoptosis, necroptosis and pyroptosis, and is required to prevent tissue damage during embryonic development and adulthood. Initiator protease that induces extrinsic apoptosis by mediating cleavage and activation of effector caspases responsible for FAS/CD95-mediated and TNFRSF1A-induced cell death. Cleaves and activates effector caspases CASP3, CASP4, CASP6, CASP7, CASP9 and CASP10. Binding to the adapter molecule FADD recruits it to either receptor FAS/TNFRSF6 or TNFRSF1A. The resulting aggregate called the death-inducing signaling complex (DISC) performs CASP8 proteolytic activation. The active dimeric enzyme is then liberated from the DISC and free to activate downstream apoptotic proteases. Proteolytic fragments of the N-terminal propeptide (termed CAP3, CAP5 and CAP6) are likely retained in the DISC. In addition to extrinsic apoptosis, also acts as a negative regulator of necroptosis: acts by cleaving RIPK1 at 'Asp-324', which is crucial to inhibit RIPK1 kinase activity, limiting TNF-induced apoptosis, necroptosis and inflammatory response. Also able to initiate pyroptosis by mediating cleavage and activation of gasdermin-C and -D (GSDMC and GSDMD, respectively): gasdermin cleavage promotes release of the N-terminal moiety that binds to membranes and forms pores, triggering pyroptosis. Initiates pyroptosis following inactivation of MAP3K7/TAK1. Also acts as a regulator of innate immunity by mediating cleavage and inactivation of N4BP1 downstream of TLR3 or TLR4, thereby promoting cytokine production. May participate in the Granzyme B (GZMB) cell death pathways. Cleaves PARP1 and PARP2. Independent of its protease activity, promotes cell migration following phosphorylation at Tyr-380. Functionally, lacks the catalytic site and may interfere with the pro-apoptotic activity of the complex. In terms of biological role, lacks the catalytic site and may interfere with the pro-apoptotic activity of the complex. Acts as an inhibitor of the caspase cascade. This Homo sapiens (Human) protein is Caspase-8.